Reading from the N-terminus, the 509-residue chain is MEISERVRARLAVLSGHLSEGKQDSPAIERWCTSADTSVAPLGSLKGTLTIVDERTGKNYKVPVSDDGTVKAVDFKKIVTGKEDKGLKLYDPGYLNTAPVRSSISYIDGDEGILRYRGYPIEEMAENSTFLEVAYLLMYGNLPSESQLSDWEFAVSQHSAVPQGVLDIIQSMPHDAHPMGVLVSAMSALSIFHPDANPALRGQDIYDSKQVRDKQIIRIIGKAPTIAAAAYLRMAGRPPVLPSGNLPYADNFLYMLDSLGNRSYKPNPRLARVLDILFILHAEHEMNCSTAAARHLASSGVDVYTAVAGAVGALYGPLHGGANEAVLKMLSEIGTVENIPEFIEGVKNRKRKMSGFGHRVYKNYDPRAKVIKNLADEVFSIVGKDPLIEVAVALEKAALSDDYFVKRKLYPNVDFYSGLIYRAMGFPPEFFTVLFAIPRMAGYLSHWKESLDDPDTKIMRPQQVYTGVWLRHYTPVRERIVTDDSKESDKLGQVATSNASRRRLAGSSV.

Active-site residues include His319, His358, and Asp414. The segment at 485 to 509 (SKESDKLGQVATSNASRRRLAGSSV) is disordered. Basic residues predominate over residues 500–509 (SRRRLAGSSV).

Belongs to the citrate synthase family. As to expression, widely expressed. Expressed throughout the shoot. Expressed in flower, silique, stem, cauline leaf, young leaf, mature leaf and senescent leaf.

It is found in the peroxisome. The enzyme catalyses oxaloacetate + acetyl-CoA + H2O = citrate + CoA + H(+). It participates in carbohydrate metabolism; tricarboxylic acid cycle; isocitrate from oxaloacetate: step 1/2. Functionally, peroxisomal citrate synthase required for the fatty acid respiration in seedlings, citrate being exported from peroxisomes into mitochondria during respiration of triacylglycerol (TAG). Indeed, complete respiration requires the transfer of carbon in the form of citrate from the peroxisome to the mitochondria. This is Citrate synthase 3, peroxisomal (CSY3) from Arabidopsis thaliana (Mouse-ear cress).